The following is a 347-amino-acid chain: Haptoglobin (347 aa).

A signal peptide spans 1 to 18; it reads MRALGAVVTLLLWGQLFA. Residues 31-88 enclose the Sushi domain; that stretch reads DSCPKPPEIANGYVEHLVRYRCRQFYRLRAEGDGVYTLNDEKQWMNTVAGEKLPECEA. 4 disulfides stabilise this stretch: cysteine 52–cysteine 86, cysteine 90–cysteine 207, cysteine 250–cysteine 281, and cysteine 292–cysteine 322. The 243-residue stretch at 103-345 folds into the Peptidase S1 domain; the sequence is IIGGSMDAKG…LKDWVQETMA (243 aa). 3 N-linked (GlcNAc...) asparagine glycosylation sites follow: asparagine 148, asparagine 182, and asparagine 264. Residues 259 to 264 are interaction with CD163; the sequence is VPEKKN.

It belongs to the peptidase S1 family. In terms of assembly, tetramer of two alpha and two beta chains; disulfide-linked. The hemoglobin/haptoglobin complex is composed of a haptoglobin dimer bound to two hemoglobin alpha-beta dimers. Interacts with CD163. Interacts with ERGIC3. As to expression, expressed by the liver and secreted in plasma.

It is found in the secreted. As a result of hemolysis, hemoglobin is found to accumulate in the kidney and is secreted in the urine. Haptoglobin captures, and combines with free plasma hemoglobin to allow hepatic recycling of heme iron and to prevent kidney damage. Haptoglobin also acts as an antioxidant, has antibacterial activity and plays a role in modulating many aspects of the acute phase response. Hemoglobin/haptoglobin complexes are rapidly cleared by the macrophage CD163 scavenger receptor expressed on the surface of liver Kupfer cells through an endocytic lysosomal degradation pathway. This chain is Haptoglobin (Hp), found in Mus caroli (Ryukyu mouse).